We begin with the raw amino-acid sequence, 239 residues long: tRNA (guanine-N(1)-)-methyltransferase (239 aa).

S-adenosyl-L-methionine contacts are provided by residues Gly108 and 127-132 (LGDFVL).

The protein belongs to the RNA methyltransferase TrmD family. As to quaternary structure, homodimer.

It is found in the cytoplasm. It catalyses the reaction guanosine(37) in tRNA + S-adenosyl-L-methionine = N(1)-methylguanosine(37) in tRNA + S-adenosyl-L-homocysteine + H(+). In terms of biological role, specifically methylates guanosine-37 in various tRNAs. The protein is tRNA (guanine-N(1)-)-methyltransferase of Streptococcus pyogenes serotype M6 (strain ATCC BAA-946 / MGAS10394).